A 337-amino-acid chain; its full sequence is AP2/ERF and B3 domain-containing transcription factor At1g50680 (337 aa).

The AP2/ERF DNA-binding region spans 27–84; sequence KYKGVVQQQNGHWGAQIYADHKRIWLGTFKSADEAATAYDSASIKLRSFDANSHRNFP. Positions 157-271 form a DNA-binding region, TF-B3; that stretch reads FQKELTPSDV…VKTLEGQRKN (115 aa).

Belongs to the AP2/ERF transcription factor family. RAV subfamily.

Its subcellular location is the nucleus. Probably acts as a transcriptional activator. Binds to the GCC-box pathogenesis-related promoter element. May be involved in the regulation of gene expression by stress factors and by components of stress signal transduction pathways. The polypeptide is AP2/ERF and B3 domain-containing transcription factor At1g50680 (Arabidopsis thaliana (Mouse-ear cress)).